Here is a 444-residue protein sequence, read N- to C-terminus: Phosphoglucosamine mutase (444 aa).

Ser103 serves as the catalytic Phosphoserine intermediate. Ser103, Asp241, Asp243, and Asp245 together coordinate Mg(2+). Phosphoserine is present on Ser103.

It belongs to the phosphohexose mutase family. Requires Mg(2+) as cofactor. In terms of processing, activated by phosphorylation.

It catalyses the reaction alpha-D-glucosamine 1-phosphate = D-glucosamine 6-phosphate. Functionally, catalyzes the conversion of glucosamine-6-phosphate to glucosamine-1-phosphate. The chain is Phosphoglucosamine mutase from Deinococcus radiodurans (strain ATCC 13939 / DSM 20539 / JCM 16871 / CCUG 27074 / LMG 4051 / NBRC 15346 / NCIMB 9279 / VKM B-1422 / R1).